The chain runs to 562 residues: Transcriptional adapter 2A (562 aa).

The segment at 91–146 adopts a ZZ-type zinc-finger fold; the sequence is KDANRCATCRCSLTEPYIKCSECLDTLLCLQCFSRGKEAFSHRNNHAYIIVRDNIQ. Zn(2+) contacts are provided by C96, C99, C110, C113, C119, C122, H132, and H136. An SANT domain is found at 154–198; that stretch reads WTARDERILLKTLRTHGYGNWEAVSQALDQRHEPAEVRRHYHDCY. Residues 471–562 enclose the SWIRM domain; the sequence is CLTPTEYNFS…GHISRPPSYG (92 aa).

As to quaternary structure, component of the Ada2a-containing (ATAC) complex composed of at least Ada2a, Atac1, Hcf, Ada3, Gcn5, Mocs2B, Charac-14, Atac3, Atac2, NC2beta and wds. Component of a complex that does not include Gcn5 or Ada3.

It localises to the nucleus. The protein resides in the chromosome. Component of the histone acetyltransferase (HAT) complex ATAC; predominantly involved in acetylation of histone H4, including at Lys-6 (H4K5ac) and Lys-13 (H4K12ac). May be part of several different complexes, including Gcn5-independent complexes involved in RNA polymerase II-dependent transcription. In Drosophila melanogaster (Fruit fly), this protein is Transcriptional adapter 2A.